Here is a 168-residue protein sequence, read N- to C-terminus: Ribulose bisphosphate carboxylase small subunit, chloroplastic (168 aa).

The N-terminal 28 residues, 1–28 (MASIAAKSVSLRAATRRAAPVAAPADAR), are a transit peptide targeting the chloroplast.

The protein belongs to the RuBisCO small chain family. Heterohexadecamer of 8 large and 8 small subunits.

Its subcellular location is the plastid. It is found in the chloroplast. RuBisCO catalyzes two reactions: the carboxylation of D-ribulose 1,5-bisphosphate, the primary event in carbon dioxide fixation, as well as the oxidative fragmentation of the pentose substrate. Both reactions occur simultaneously and in competition at the same active site. Although the small subunit is not catalytic it is essential for maximal activity. The polypeptide is Ribulose bisphosphate carboxylase small subunit, chloroplastic (Chlamydomonas moewusii (Chlamydomonas eugametos)).